The primary structure comprises 685 residues: Putative mannosyltransferase YycA (685 aa).

6 helical membrane-spanning segments follow: residues 6–26 (FDAALILILLAAAFLNTYHIW), 68–88 (VLWIQTIFALIFGVHTWSVII), 109–129 (FGVGAARIAALVMALTPIAVA), 154–174 (AVKQGKLVWLLTAFALIGLAF), 176–196 (MKMMQAFMVLPAFVLFYLIAS), and 204–224 (IGSLLLSLVLLTGLSLSWAIA). Positions 269 to 347 (MNAAGGGNMQ…GGGGGKSVNM (79 aa)) are disordered. Polar residues predominate over residues 277–286 (MQNQDNMQAP). Residues 287 to 303 (NGNGSSFSQNGNQSFGN) are compositionally biased toward low complexity. Positions 318–343 (LNGGGGTPPTGGNGPGNGGPGGGGGK) are enriched in gly residues. Transmembrane regions (helical) follow at residues 363–383 (LSGQISWMLPFSLIGLLGAII), 399–419 (TLFWAAWLVPVAGFFSIAGFF), 422–442 (YYLIMLAPPIAALSGIGWYTM), 455–475 (YLLPAAVLITAVFQVYILSAY), 479–499 (IGSVWMYVLGLLGLGITLALL), 513–533 (IISLCVLLLTPVYWSATPLLY), and 573–593 (TGEEYLFATLTTVTAAPYIIY). Residues 652–685 (TSDEYSGSSSSTNSVQGMRRGPGGESQQTLYLVE) form a disordered region. Positions 654-665 (DEYSGSSSSTNS) are enriched in low complexity. The span at 676–685 (ESQQTLYLVE) shows a compositional bias: polar residues.

It belongs to the glycosyltransferase 39 family.

The protein localises to the cell membrane. The chain is Putative mannosyltransferase YycA (yycA) from Bacillus subtilis (strain 168).